A 130-amino-acid chain; its full sequence is Glycine cleavage system H protein (130 aa).

The region spanning 24-106 (TFTVGITDHA…YGDGWLYRIT (83 aa)) is the Lipoyl-binding domain. Residue K65 is modified to N6-lipoyllysine.

The protein belongs to the GcvH family. In terms of assembly, the glycine cleavage system is composed of four proteins: P, T, L and H. It depends on (R)-lipoate as a cofactor.

Its function is as follows. The glycine cleavage system catalyzes the degradation of glycine. The H protein shuttles the methylamine group of glycine from the P protein to the T protein. This chain is Glycine cleavage system H protein, found in Coxiella burnetii (strain CbuK_Q154) (Coxiella burnetii (strain Q154)).